A 134-amino-acid chain; its full sequence is Transcription antitermination protein NusB (134 aa).

The protein belongs to the NusB family.

In terms of biological role, involved in transcription antitermination. Required for transcription of ribosomal RNA (rRNA) genes. Binds specifically to the boxA antiterminator sequence of the ribosomal RNA (rrn) operons. The sequence is that of Transcription antitermination protein NusB from Syntrophomonas wolfei subsp. wolfei (strain DSM 2245B / Goettingen).